A 1819-amino-acid polypeptide reads, in one-letter code: U3 small nucleolar RNA-associated protein 10 (1819 aa).

An HEAT repeat occupies 1779 to 1817 (LIPYIAELLEDDDEDVELEVRKGLVKVLENVLGEPLDRY).

It belongs to the HEATR1/UTP10 family. In terms of assembly, component of the ribosomal small subunit (SSU) processome.

It localises to the nucleus. The protein localises to the nucleolus. Involved in nucleolar processing of pre-18S ribosomal RNA. Involved in ribosome biosynthesis. In Meyerozyma guilliermondii (strain ATCC 6260 / CBS 566 / DSM 6381 / JCM 1539 / NBRC 10279 / NRRL Y-324) (Yeast), this protein is U3 small nucleolar RNA-associated protein 10.